The sequence spans 346 residues: NADH-ubiquinone oxidoreductase chain 2 (346 aa).

Transmembrane regions (helical) follow at residues 7 to 27 (AIIT…NHWI), 59 to 79 (YFLT…MNMW), 93 to 115 (ISCT…HFWF), 151 to 171 (TTLL…GGLN), 178 to 198 (IMAF…TLSP), 200 to 220 (ILLL…LMIN), 242 to 262 (TMML…GFAP), 275 to 294 (LSMF…YFYL), and 325 to 345 (LATI…LKAI).

This sequence belongs to the complex I subunit 2 family.

It is found in the mitochondrion inner membrane. The catalysed reaction is a ubiquinone + NADH + 5 H(+)(in) = a ubiquinol + NAD(+) + 4 H(+)(out). Its function is as follows. Core subunit of the mitochondrial membrane respiratory chain NADH dehydrogenase (Complex I) that is believed to belong to the minimal assembly required for catalysis. Complex I functions in the transfer of electrons from NADH to the respiratory chain. The immediate electron acceptor for the enzyme is believed to be ubiquinone. In Pelomedusa subrufa (African side-necked turtle), this protein is NADH-ubiquinone oxidoreductase chain 2 (MT-ND2).